Consider the following 473-residue polypeptide: MGRLVVVSNRIAPPDNKGGAGGLAVGVLGALKAAGGLWFGWSGETGNEDKPLKKVTRGNMTWASFNLSEQDYEEYYCQFSNAVLWPAFHYRLDLVQFQRPAWEGYSRVNALLADKLLPLLKDDDIIWVHDYHLLPFASELRKRGVNNRIGFFLHIPFPTPEIFNALPPHDTLLEQLCDFDLLGFQTENDRLAFLDSLSSQTRVTTRGSKSHSAWGKSFRTEVYPIGIEPDEIAQQASGPLPPKLAQLKAELKNVQNIFSVERLDYSKGLPERFQAYEALLEKYPQHHGKIRYTQIAPTSRGEVQAYQDIRHQLETEAGRINGKYGQLGWTPLYYLNQHFDRKLLMKVFRYSDVGLVTPLRDGMNLVAKEFVAAQDPANPGVLVLSQFAGAANELTSALIVNPYDRDDVAVALHRALTMPLAERISRHAEMLETIIKNDINHWQQRFIRDLKDVAPRSAETLHRNKVATFPKLA.

R10 lines the D-glucose 6-phosphate pocket. UDP-alpha-D-glucose is bound at residue 21 to 22 (GG). Positions 76 and 130 each coordinate D-glucose 6-phosphate. UDP-alpha-D-glucose-binding residues include R262 and K267. R300 lines the D-glucose 6-phosphate pocket. Residues F339 and 365–369 (LVAKE) contribute to the UDP-alpha-D-glucose site.

It belongs to the glycosyltransferase 20 family. As to quaternary structure, homotetramer.

The catalysed reaction is D-glucose 6-phosphate + UDP-alpha-D-glucose = alpha,alpha-trehalose 6-phosphate + UDP + H(+). The protein operates within glycan biosynthesis; trehalose biosynthesis. Its function is as follows. Probably involved in the osmoprotection via the biosynthesis of trehalose. Catalyzes the transfer of glucose from UDP-alpha-D-glucose (UDP-Glc) to D-glucose 6-phosphate (Glc-6-P) to form trehalose-6-phosphate. Acts with retention of the anomeric configuration of the UDP-sugar donor. The chain is Trehalose-6-phosphate synthase from Citrobacter koseri (strain ATCC BAA-895 / CDC 4225-83 / SGSC4696).